A 662-amino-acid chain; its full sequence is DNA ligase (662 aa).

NAD(+)-binding positions include 34-38, 83-84, and glutamate 113; these read DYDYD and SI. Residue lysine 115 is the N6-AMP-lysine intermediate of the active site. NAD(+) contacts are provided by arginine 136, glutamate 172, lysine 286, and lysine 310. Zn(2+) is bound by residues cysteine 404, cysteine 407, cysteine 422, and cysteine 427. The BRCT domain maps to 583-662; that stretch reads RASASCQGKT…SDLLKILYPN (80 aa).

The protein belongs to the NAD-dependent DNA ligase family. LigA subfamily. Requires Mg(2+) as cofactor. Mn(2+) is required as a cofactor.

It carries out the reaction NAD(+) + (deoxyribonucleotide)n-3'-hydroxyl + 5'-phospho-(deoxyribonucleotide)m = (deoxyribonucleotide)n+m + AMP + beta-nicotinamide D-nucleotide.. In terms of biological role, DNA ligase that catalyzes the formation of phosphodiester linkages between 5'-phosphoryl and 3'-hydroxyl groups in double-stranded DNA using NAD as a coenzyme and as the energy source for the reaction. It is essential for DNA replication and repair of damaged DNA. The chain is DNA ligase from Chlamydia felis (strain Fe/C-56) (Chlamydophila felis).